A 238-amino-acid chain; its full sequence is tRNA1(Val) (adenine(37)-N6)-methyltransferase (238 aa).

The protein belongs to the methyltransferase superfamily. tRNA (adenine-N(6)-)-methyltransferase family.

Its subcellular location is the cytoplasm. It carries out the reaction adenosine(37) in tRNA1(Val) + S-adenosyl-L-methionine = N(6)-methyladenosine(37) in tRNA1(Val) + S-adenosyl-L-homocysteine + H(+). Functionally, specifically methylates the adenine in position 37 of tRNA(1)(Val) (anticodon cmo5UAC). This is tRNA1(Val) (adenine(37)-N6)-methyltransferase from Shewanella putrefaciens (strain CN-32 / ATCC BAA-453).